Consider the following 97-residue polypeptide: Putative CC-type chemokine U83 (97 aa).

2 disulfide bridges follow: cysteine 32/cysteine 62 and cysteine 33/cysteine 76.

Belongs to the intercrine beta (chemokine CC) family. Highly divergent.

This Homo sapiens (Human) protein is Putative CC-type chemokine U83 (U83).